We begin with the raw amino-acid sequence, 97 residues long: Ribosomal biogenesis factor (97 aa).

At Ser19 the chain carries Phosphoserine. Residue Lys21 is modified to N6-acetyllysine. A Phosphoserine modification is found at Ser69.

In terms of assembly, associates with the pre-60S ribosomal particles.

The protein resides in the nucleus. The protein localises to the nucleolus. Trans-acting factor in ribosome biogenesis required for efficient 40S and 60S subunit production. This is Ribosomal biogenesis factor (Rbis) from Mus musculus (Mouse).